The sequence spans 367 residues: Anhydro-N-acetylmuramic acid kinase (367 aa).

Residue 11-18 (GTSLDGVD) coordinates ATP.

Belongs to the anhydro-N-acetylmuramic acid kinase family.

The enzyme catalyses 1,6-anhydro-N-acetyl-beta-muramate + ATP + H2O = N-acetyl-D-muramate 6-phosphate + ADP + H(+). It functions in the pathway amino-sugar metabolism; 1,6-anhydro-N-acetylmuramate degradation. It participates in cell wall biogenesis; peptidoglycan recycling. Catalyzes the specific phosphorylation of 1,6-anhydro-N-acetylmuramic acid (anhMurNAc) with the simultaneous cleavage of the 1,6-anhydro ring, generating MurNAc-6-P. Is required for the utilization of anhMurNAc either imported from the medium or derived from its own cell wall murein, and thus plays a role in cell wall recycling. In Rhodopseudomonas palustris (strain HaA2), this protein is Anhydro-N-acetylmuramic acid kinase.